The primary structure comprises 100 residues: NADH-quinone oxidoreductase subunit K (100 aa).

3 helical membrane passes run 4-24, 28-48, and 60-80; these read LQHG…GLVI, LLFM…AFVV, and VMYI…LALL.

Belongs to the complex I subunit 4L family. In terms of assembly, NDH-1 is composed of 13 different subunits. Subunits NuoA, H, J, K, L, M, N constitute the membrane sector of the complex.

It localises to the cell inner membrane. The catalysed reaction is a quinone + NADH + 5 H(+)(in) = a quinol + NAD(+) + 4 H(+)(out). Functionally, NDH-1 shuttles electrons from NADH, via FMN and iron-sulfur (Fe-S) centers, to quinones in the respiratory chain. The immediate electron acceptor for the enzyme in this species is believed to be ubiquinone. Couples the redox reaction to proton translocation (for every two electrons transferred, four hydrogen ions are translocated across the cytoplasmic membrane), and thus conserves the redox energy in a proton gradient. The sequence is that of NADH-quinone oxidoreductase subunit K from Musicola paradisiaca (strain Ech703) (Dickeya paradisiaca).